The chain runs to 82 residues: ATP synthase subunit c, chloroplastic (82 aa).

The next 2 membrane-spanning stretches (helical) occupy residues 3–23 and 57–77; these read PIVAAASVIAAGLAVGLAAIG and FAFMESLTIYGLVVALALLFA.

The protein belongs to the ATPase C chain family. In terms of assembly, F-type ATPases have 2 components, F(1) - the catalytic core - and F(0) - the membrane proton channel. F(1) has five subunits: alpha(3), beta(3), gamma(1), delta(1), epsilon(1). F(0) has four main subunits: a(1), b(1), b'(1) and c(10-14). The alpha and beta chains form an alternating ring which encloses part of the gamma chain. F(1) is attached to F(0) by a central stalk formed by the gamma and epsilon chains, while a peripheral stalk is formed by the delta, b and b' chains.

The protein localises to the plastid. Its subcellular location is the chloroplast thylakoid membrane. Functionally, f(1)F(0) ATP synthase produces ATP from ADP in the presence of a proton or sodium gradient. F-type ATPases consist of two structural domains, F(1) containing the extramembraneous catalytic core and F(0) containing the membrane proton channel, linked together by a central stalk and a peripheral stalk. During catalysis, ATP synthesis in the catalytic domain of F(1) is coupled via a rotary mechanism of the central stalk subunits to proton translocation. Its function is as follows. Key component of the F(0) channel; it plays a direct role in translocation across the membrane. A homomeric c-ring of between 10-14 subunits forms the central stalk rotor element with the F(1) delta and epsilon subunits. The protein is ATP synthase subunit c, chloroplastic of Chlorella vulgaris (Green alga).